We begin with the raw amino-acid sequence, 218 residues long: ATP phosphoribosyltransferase (218 aa).

This sequence belongs to the ATP phosphoribosyltransferase family. Short subfamily. As to quaternary structure, heteromultimer composed of HisG and HisZ subunits.

The protein localises to the cytoplasm. It carries out the reaction 1-(5-phospho-beta-D-ribosyl)-ATP + diphosphate = 5-phospho-alpha-D-ribose 1-diphosphate + ATP. It participates in amino-acid biosynthesis; L-histidine biosynthesis; L-histidine from 5-phospho-alpha-D-ribose 1-diphosphate: step 1/9. Its function is as follows. Catalyzes the condensation of ATP and 5-phosphoribose 1-diphosphate to form N'-(5'-phosphoribosyl)-ATP (PR-ATP). Has a crucial role in the pathway because the rate of histidine biosynthesis seems to be controlled primarily by regulation of HisG enzymatic activity. This chain is ATP phosphoribosyltransferase, found in Burkholderia thailandensis (strain ATCC 700388 / DSM 13276 / CCUG 48851 / CIP 106301 / E264).